The primary structure comprises 820 residues: Serine/threonine-protein phosphatase 4 regulatory subunit 3-B (820 aa).

Positions 1 to 100 constitute a WH1 domain; the sequence is MSDTRRRVKV…DEIWEKICQV (100 aa). Positions 682 to 694 are enriched in acidic residues; that stretch reads ELWFNEDDEEEGE. 2 disordered regions span residues 682–711 and 750–820; these read ELWFNEDDEEEGEAVVPPVEKTKPEDDFPE and AANG…RLGS. Residues 701-711 show a composition bias toward basic and acidic residues; it reads EKTKPEDDFPE. Polar residues-rich tracts occupy residues 750 to 761 and 768 to 790; these read AANGANSTNSKS and PATSNGSSSKNTSLTTTVASTKG. The span at 798-809 shows a compositional bias: acidic residues; sequence YPDDEDEEEEED.

The protein belongs to the SMEK family. In terms of assembly, serine/threonine-protein phosphatase 4 (PP4) occurs in different assemblies of the catalytic and one or more regulatory subunits.

Regulatory subunit of serine/threonine-protein phosphatase 4 (PP4). In Xenopus laevis (African clawed frog), this protein is Serine/threonine-protein phosphatase 4 regulatory subunit 3-B.